The chain runs to 99 residues: Integration host factor subunit alpha (99 aa).

Residues 49 to 70 (FGNFDLRDKNQRPGRNPKTGED) are disordered.

The protein belongs to the bacterial histone-like protein family. As to quaternary structure, heterodimer of an alpha and a beta chain.

Its function is as follows. This protein is one of the two subunits of integration host factor, a specific DNA-binding protein that functions in genetic recombination as well as in transcriptional and translational control. This chain is Integration host factor subunit alpha, found in Cronobacter sakazakii (strain ATCC BAA-894) (Enterobacter sakazakii).